The primary structure comprises 60 residues: Large ribosomal subunit protein uL30 (60 aa).

The protein belongs to the universal ribosomal protein uL30 family. As to quaternary structure, part of the 50S ribosomal subunit.

This Streptococcus suis (strain 98HAH33) protein is Large ribosomal subunit protein uL30.